A 1316-amino-acid chain; its full sequence is DNA-directed RNA polymerase subunit beta' (1316 aa).

C60, C62, C75, and C78 together coordinate Zn(2+). The segment at 183 to 209 (ELEEEGAKSDVRRKVRDGGEREMRQLR) is disordered. D535, D537, and D539 together coordinate Mg(2+). Residues C890, C966, C973, and C976 each contribute to the Zn(2+) site.

Belongs to the RNA polymerase beta' chain family. The RNAP catalytic core consists of 2 alpha, 1 beta, 1 beta' and 1 omega subunit. When a sigma factor is associated with the core the holoenzyme is formed, which can initiate transcription. It depends on Mg(2+) as a cofactor. Zn(2+) is required as a cofactor.

It catalyses the reaction RNA(n) + a ribonucleoside 5'-triphosphate = RNA(n+1) + diphosphate. In terms of biological role, DNA-dependent RNA polymerase catalyzes the transcription of DNA into RNA using the four ribonucleoside triphosphates as substrates. The polypeptide is DNA-directed RNA polymerase subunit beta' (Mycolicibacterium gilvum (strain PYR-GCK) (Mycobacterium gilvum (strain PYR-GCK))).